We begin with the raw amino-acid sequence, 397 residues long: Iron-sulfur cluster assembly SufBD family protein Mb1497 (397 aa).

It belongs to the iron-sulfur cluster assembly SufBD family.

This chain is Iron-sulfur cluster assembly SufBD family protein Mb1497, found in Mycobacterium bovis (strain ATCC BAA-935 / AF2122/97).